The sequence spans 32 residues: Photosystem I reaction center subunit XII (32 aa).

The chain crosses the membrane as a helical span at residues 10 to 27 (VVALVSAFVTGILALRLG).

This sequence belongs to the PsaM family.

Its subcellular location is the plastid. The protein localises to the chloroplast thylakoid membrane. This Staurastrum punctulatum (Green alga) protein is Photosystem I reaction center subunit XII.